Consider the following 119-residue polypeptide: Promotilin (119 aa).

A signal peptide spans Met1 to Ala25. The disordered stretch occupies residues Glu40–Glu72.

Belongs to the motilin family.

The protein resides in the secreted. Its function is as follows. Plays an important role in the regulation of interdigestive gastrointestinal motility and indirectly causes rhythmic contraction of duodenal and colonic smooth muscle. In Sus scrofa (Pig), this protein is Promotilin (MLN).